Consider the following 71-residue polypeptide: Bacteriocin carnobacteriocin-A (71 aa).

The propeptide occupies 1–18 (MNNVKELSIKEMQQVTGG). A disulfide bridge links C40 with C69.

It is found in the secreted. Has antibacterial activity. The protein is Bacteriocin carnobacteriocin-A (cbnBA) of Carnobacterium maltaromaticum (Carnobacterium piscicola).